The chain runs to 151 residues: MVKAVAVLAGTDVKGTIFFSQEGDGPTTVTGSISGLKPGLHGFHVHALGDTTNGCMSTGPHFNPVGKEHGAPEDEDRHAGDLGNVTAGEDGVVNVNITDSQIPLAGPHSIIGRAVVVHADPDDLGKGGHELSKSTGNAGGRVACGIIGLQG.

Residues histidine 44, histidine 46, and histidine 61 each coordinate Cu cation. Cysteines 55 and 144 form a disulfide. Residues histidine 61, histidine 69, histidine 78, and aspartate 81 each contribute to the Zn(2+) site. Histidine 118 is a binding site for Cu cation.

This sequence belongs to the Cu-Zn superoxide dismutase family. Homodimer. The cofactor is Cu cation. It depends on Zn(2+) as a cofactor.

It is found in the cytoplasm. It catalyses the reaction 2 superoxide + 2 H(+) = H2O2 + O2. In terms of biological role, destroys radicals which are normally produced within the cells and which are toxic to biological systems. This is Superoxide dismutase [Cu-Zn] 2 (SODCC.1) from Zea mays (Maize).